A 598-amino-acid polypeptide reads, in one-letter code: UvrABC system protein C (598 aa).

The 81-residue stretch at 11 to 91 (QKPGVYIMHN…IKKYRPHYNI (81 aa)) folds into the GIY-YIG domain. The region spanning 195–230 (KTTIKKLKKDMNRYAKNMEFEKAAMLRDQIDTIKIT) is the UVR domain.

Belongs to the UvrC family. As to quaternary structure, interacts with UvrB in an incision complex.

The protein localises to the cytoplasm. Its function is as follows. The UvrABC repair system catalyzes the recognition and processing of DNA lesions. UvrC both incises the 5' and 3' sides of the lesion. The N-terminal half is responsible for the 3' incision and the C-terminal half is responsible for the 5' incision. This is UvrABC system protein C from Methanosphaera stadtmanae (strain ATCC 43021 / DSM 3091 / JCM 11832 / MCB-3).